A 182-amino-acid chain; its full sequence is Crossover junction endodeoxyribonuclease RuvC (182 aa).

Catalysis depends on residues Asp-7, Glu-68, and Asp-141. The Mg(2+) site is built by Asp-7, Glu-68, and Asp-141.

This sequence belongs to the RuvC family. As to quaternary structure, homodimer which binds Holliday junction (HJ) DNA. The HJ becomes 2-fold symmetrical on binding to RuvC with unstacked arms; it has a different conformation from HJ DNA in complex with RuvA. In the full resolvosome a probable DNA-RuvA(4)-RuvB(12)-RuvC(2) complex forms which resolves the HJ. Mg(2+) serves as cofactor.

The protein resides in the cytoplasm. The enzyme catalyses Endonucleolytic cleavage at a junction such as a reciprocal single-stranded crossover between two homologous DNA duplexes (Holliday junction).. The RuvA-RuvB-RuvC complex processes Holliday junction (HJ) DNA during genetic recombination and DNA repair. Endonuclease that resolves HJ intermediates. Cleaves cruciform DNA by making single-stranded nicks across the HJ at symmetrical positions within the homologous arms, yielding a 5'-phosphate and a 3'-hydroxyl group; requires a central core of homology in the junction. The consensus cleavage sequence is 5'-(A/T)TT(C/G)-3'. Cleavage occurs on the 3'-side of the TT dinucleotide at the point of strand exchange. HJ branch migration catalyzed by RuvA-RuvB allows RuvC to scan DNA until it finds its consensus sequence, where it cleaves and resolves the cruciform DNA. The chain is Crossover junction endodeoxyribonuclease RuvC from Thermobifida fusca (strain YX).